The chain runs to 333 residues: Taste receptor type 2 member 38 (333 aa).

At 1–17 the chain is on the extracellular side; sequence MLTLTHICTVSYEVRST. A helical transmembrane segment spans residues 18–38; it reads FLFISVLEFAVGFLTNAFISL. Over 39-55 the chain is Cytoplasmic; sequence VNFWDVVKRQPLSNSDC. The chain crosses the membrane as a helical span at residues 56–76; that stretch reads VLLCLSISRLFLHGLLFLSAI. The Extracellular portion of the chain corresponds to 77-94; the sequence is QLTHFQKLSEPLNHSYQV. The chain crosses the membrane as a helical span at residues 95–115; the sequence is ILMLWMIANQANLWLAACLSL. Residues 116-142 lie on the Cytoplasmic side of the membrane; sequence LYCSKLIRFSHTFLICLASWVSRKISQ. A helical membrane pass occupies residues 143-163; sequence MLLGIILCSCICTVLCVWCFF. Residues 164 to 190 lie on the Extracellular side of the membrane; it reads GRLHFTVTTVLFMNNNTRLNWQIKDLN. Residue Asn178 is glycosylated (N-linked (GlcNAc...) asparagine). Residues 191–211 form a helical membrane-spanning segment; that stretch reads LFYSFLFCYLWSVPPFLLFLV. Over 212 to 251 the chain is Cytoplasmic; the sequence is SSGMLTVSLGRHMRTMKVYTRDSRDPSLEAHIKALKSLVS. Residues 252–272 traverse the membrane as a helical segment; sequence FFCFFVISSCAAFISVPLLIL. The Extracellular segment spans residues 273 to 276; the sequence is WHDK. A helical transmembrane segment spans residues 277–297; that stretch reads IGVMVCVGIMAACPSGHAAVL. The Cytoplasmic segment spans residues 298–333; that stretch reads ISGNAKLRRAVTTILLWAQSSLKVRADHMADSRTLC.

This sequence belongs to the G-protein coupled receptor T2R family.

The protein localises to the membrane. Its function is as follows. Receptor that may play a role in the perception of bitterness and is gustducin-linked. May play a role in sensing the chemical composition of the gastrointestinal content. The activity of this receptor may stimulate alpha gustducin, mediate PLC-beta-2 activation and lead to the gating of TRPM5. In Papio hamadryas (Hamadryas baboon), this protein is Taste receptor type 2 member 38 (TAS2R38).